Here is a 95-residue protein sequence, read N- to C-terminus: Aspartyl/glutamyl-tRNA(Asn/Gln) amidotransferase subunit C (95 aa).

It belongs to the GatC family. Heterotrimer of A, B and C subunits.

It carries out the reaction L-glutamyl-tRNA(Gln) + L-glutamine + ATP + H2O = L-glutaminyl-tRNA(Gln) + L-glutamate + ADP + phosphate + H(+). It catalyses the reaction L-aspartyl-tRNA(Asn) + L-glutamine + ATP + H2O = L-asparaginyl-tRNA(Asn) + L-glutamate + ADP + phosphate + 2 H(+). Functionally, allows the formation of correctly charged Asn-tRNA(Asn) or Gln-tRNA(Gln) through the transamidation of misacylated Asp-tRNA(Asn) or Glu-tRNA(Gln) in organisms which lack either or both of asparaginyl-tRNA or glutaminyl-tRNA synthetases. The reaction takes place in the presence of glutamine and ATP through an activated phospho-Asp-tRNA(Asn) or phospho-Glu-tRNA(Gln). The polypeptide is Aspartyl/glutamyl-tRNA(Asn/Gln) amidotransferase subunit C (Syntrophotalea carbinolica (strain DSM 2380 / NBRC 103641 / GraBd1) (Pelobacter carbinolicus)).